The following is a 154-amino-acid chain: 6,7-dimethyl-8-ribityllumazine synthase (154 aa).

5-amino-6-(D-ribitylamino)uracil is bound by residues Trp22, 56–58 (AWE), and 80–82 (CVV). 85–86 (DT) provides a ligand contact to (2S)-2-hydroxy-3-oxobutyl phosphate. His88 serves as the catalytic Proton donor. Asn113 provides a ligand contact to 5-amino-6-(D-ribitylamino)uracil. (2S)-2-hydroxy-3-oxobutyl phosphate is bound at residue Arg127.

The protein belongs to the DMRL synthase family. Forms an icosahedral capsid composed of 60 subunits, arranged as a dodecamer of pentamers.

It carries out the reaction (2S)-2-hydroxy-3-oxobutyl phosphate + 5-amino-6-(D-ribitylamino)uracil = 6,7-dimethyl-8-(1-D-ribityl)lumazine + phosphate + 2 H2O + H(+). Its pathway is cofactor biosynthesis; riboflavin biosynthesis; riboflavin from 2-hydroxy-3-oxobutyl phosphate and 5-amino-6-(D-ribitylamino)uracil: step 1/2. Its function is as follows. Catalyzes the formation of 6,7-dimethyl-8-ribityllumazine by condensation of 5-amino-6-(D-ribitylamino)uracil with 3,4-dihydroxy-2-butanone 4-phosphate. This is the penultimate step in the biosynthesis of riboflavin. The polypeptide is 6,7-dimethyl-8-ribityllumazine synthase (Xylella fastidiosa (strain M23)).